A 195-amino-acid chain; its full sequence is Peptidyl-tRNA hydrolase (195 aa).

Tyr17 contacts tRNA. Residue His22 is the Proton acceptor of the active site. Residues Phe68, Asn70, and Asn116 each coordinate tRNA.

This sequence belongs to the PTH family. Monomer.

It localises to the cytoplasm. It carries out the reaction an N-acyl-L-alpha-aminoacyl-tRNA + H2O = an N-acyl-L-amino acid + a tRNA + H(+). Functionally, hydrolyzes ribosome-free peptidyl-tRNAs (with 1 or more amino acids incorporated), which drop off the ribosome during protein synthesis, or as a result of ribosome stalling. Its function is as follows. Catalyzes the release of premature peptidyl moieties from peptidyl-tRNA molecules trapped in stalled 50S ribosomal subunits, and thus maintains levels of free tRNAs and 50S ribosomes. The protein is Peptidyl-tRNA hydrolase of Shewanella denitrificans (strain OS217 / ATCC BAA-1090 / DSM 15013).